The following is a 406-amino-acid chain: Phosphopentomutase (406 aa).

Residues aspartate 10, aspartate 305, histidine 310, aspartate 346, histidine 347, and histidine 358 each contribute to the Mn(2+) site.

It belongs to the phosphopentomutase family. The cofactor is Mn(2+).

Its subcellular location is the cytoplasm. It carries out the reaction 2-deoxy-alpha-D-ribose 1-phosphate = 2-deoxy-D-ribose 5-phosphate. The enzyme catalyses alpha-D-ribose 1-phosphate = D-ribose 5-phosphate. The protein operates within carbohydrate degradation; 2-deoxy-D-ribose 1-phosphate degradation; D-glyceraldehyde 3-phosphate and acetaldehyde from 2-deoxy-alpha-D-ribose 1-phosphate: step 1/2. Isomerase that catalyzes the conversion of deoxy-ribose 1-phosphate (dRib-1-P) and ribose 1-phosphate (Rib-1-P) to deoxy-ribose 5-phosphate (dRib-5-P) and ribose 5-phosphate (Rib-5-P), respectively. In Vibrio campbellii (strain ATCC BAA-1116), this protein is Phosphopentomutase.